The following is a 513-amino-acid chain: Alpha,alpha-trehalose-phosphate synthase [UDP-forming] (513 aa).

Residue Y40 is modified to Phosphotyrosine. D-glucose 6-phosphate-binding residues include Y104 and D158. The UDP site is built by R294 and K299. Residues R294 and K299 each coordinate UDP-alpha-D-glucose. Residue R332 coordinates D-glucose 6-phosphate. D393–E401 is a UDP-alpha-D-glucose binding site. L397–E401 is a UDP binding site. Phosphoserine is present on S503.

This sequence belongs to the glycosyltransferase 20 family. In terms of assembly, homomer. Component of the trehalose synthase complex that contains at least tps1, ntp1 and tpp1. Interacts with tpp1. Interacts with ntp1; the interaction is independent of stress conditions.

The protein localises to the cytoplasm. Its subcellular location is the nucleus. The catalysed reaction is D-glucose 6-phosphate + UDP-alpha-D-glucose = alpha,alpha-trehalose 6-phosphate + UDP + H(+). It functions in the pathway carbohydrate biosynthesis. Functionally, synthase catalytic subunit of the trehalose synthase complex that catalyzes the production of trehalose from glucose-6-phosphate and UDP-alpha-D-glucose in a two step process. The disaccharide trehalose serves as a storage carbohydrate that is mobilized during nutrient stress and spore germination. Together with ntp1, regulates the level of trehalose as a protectant for cell integrity during thermal and osmotic stress. This is Alpha,alpha-trehalose-phosphate synthase [UDP-forming] from Schizosaccharomyces pombe (strain 972 / ATCC 24843) (Fission yeast).